The following is a 483-amino-acid chain: UDP-N-acetylmuramoyl-L-alanyl-D-glutamate--2,6-diaminopimelate ligase (483 aa).

Residue S30 participates in UDP-N-acetyl-alpha-D-muramoyl-L-alanyl-D-glutamate binding. 109–115 is an ATP binding site; the sequence is GTNGKTT. UDP-N-acetyl-alpha-D-muramoyl-L-alanyl-D-glutamate-binding positions include 151-152, S178, and R186; that span reads TT. K218 bears the N6-carboxylysine mark. Meso-2,6-diaminopimelate is bound by residues R380, 403–406, G453, and E457; that span reads DNPR. Residues 403 to 406 carry the Meso-diaminopimelate recognition motif motif; sequence DNPR.

The protein belongs to the MurCDEF family. MurE subfamily. Mg(2+) serves as cofactor. Post-translationally, carboxylation is probably crucial for Mg(2+) binding and, consequently, for the gamma-phosphate positioning of ATP.

It is found in the cytoplasm. It carries out the reaction UDP-N-acetyl-alpha-D-muramoyl-L-alanyl-D-glutamate + meso-2,6-diaminopimelate + ATP = UDP-N-acetyl-alpha-D-muramoyl-L-alanyl-gamma-D-glutamyl-meso-2,6-diaminopimelate + ADP + phosphate + H(+). It participates in cell wall biogenesis; peptidoglycan biosynthesis. In terms of biological role, catalyzes the addition of meso-diaminopimelic acid to the nucleotide precursor UDP-N-acetylmuramoyl-L-alanyl-D-glutamate (UMAG) in the biosynthesis of bacterial cell-wall peptidoglycan. The chain is UDP-N-acetylmuramoyl-L-alanyl-D-glutamate--2,6-diaminopimelate ligase from Chlamydia trachomatis serovar A (strain ATCC VR-571B / DSM 19440 / HAR-13).